The sequence spans 394 residues: Putative fimbrial assembly protein FimD, serogroup D (394 aa).

The protein is Putative fimbrial assembly protein FimD, serogroup D (fimD) of Dichelobacter nodosus (Bacteroides nodosus).